A 239-amino-acid polypeptide reads, in one-letter code: 1-(5-phosphoribosyl)-5-[(5-phosphoribosylamino)methylideneamino] imidazole-4-carboxamide isomerase (239 aa).

D8 serves as the catalytic Proton acceptor. D129 serves as the catalytic Proton donor.

It belongs to the HisA/HisF family.

It localises to the cytoplasm. It catalyses the reaction 1-(5-phospho-beta-D-ribosyl)-5-[(5-phospho-beta-D-ribosylamino)methylideneamino]imidazole-4-carboxamide = 5-[(5-phospho-1-deoxy-D-ribulos-1-ylimino)methylamino]-1-(5-phospho-beta-D-ribosyl)imidazole-4-carboxamide. It participates in amino-acid biosynthesis; L-histidine biosynthesis; L-histidine from 5-phospho-alpha-D-ribose 1-diphosphate: step 4/9. In Cereibacter sphaeroides (strain ATCC 17029 / ATH 2.4.9) (Rhodobacter sphaeroides), this protein is 1-(5-phosphoribosyl)-5-[(5-phosphoribosylamino)methylideneamino] imidazole-4-carboxamide isomerase.